Here is a 902-residue protein sequence, read N- to C-terminus: Proline-rich transmembrane protein 4 (902 aa).

Positions 1-18 (MAGRGCLELGLFCWVLLA) are cleaved as a signal peptide. Disordered regions lie at residues 120–149 (FTPW…SQPR) and 262–337 (PPPL…SGQP). Residues 125–139 (SSLPPESTSPLSGPT) are compositionally biased toward low complexity. Residues 271-301 (SSPSPLDSVASPSSASIKTTPVQHDPTVSTS) show a composition bias toward polar residues. The next 5 helical transmembrane spans lie at 371–391 (AGAL…LLPW), 393–413 (CPPG…AGTT), 431–451 (ALAW…GLGL), 465–485 (PIGL…AALG), and 501–521 (GLHA…SCWG). A Phosphoserine modification is found at Ser642. 3 disordered regions span residues 700-721 (GARA…TVDF), 771-811 (KTGA…SLCG), and 836-872 (VLSP…ASEL). Positions 703–717 (ANTTQSPASSPSSDC) are enriched in polar residues. Pro residues predominate over residues 786 to 798 (SPAPPELPSPGAW). 2 stretches are compositionally biased toward low complexity: residues 799–811 (PPGS…SLCG) and 843–854 (SESSPSLPASGS).

The protein localises to the membrane. The sequence is that of Proline-rich transmembrane protein 4 (Prrt4) from Rattus norvegicus (Rat).